We begin with the raw amino-acid sequence, 316 residues long: Inactive peptidyl-prolyl cis-trans isomerase FKBP6 (316 aa).

Residues 43 to 132 enclose the PPIase FKBP-type domain; sequence DASVLVKYSG…LFEIELLDFL (90 aa). 3 TPR repeats span residues 160 to 193, 208 to 241, and 242 to 275; these read AATE…LHRR, LLVL…DQKN, and AKAL…QPFN.

This sequence belongs to the FKBP6 family. In terms of assembly, interacts with HSP72/HSPA2 and CLTC. Interacts with GAPDH; leading to inhibit GAPDH catalytic activity. Interacts (via TPR repeats) with HSP90. Specifically expressed in testis and sperm.

Its subcellular location is the cytoplasm. It is found in the cytosol. The protein localises to the nucleus. Co-chaperone required during spermatogenesis to repress transposable elements and prevent their mobilization, which is essential for the germline integrity. Acts via the piRNA metabolic process, which mediates the repression of transposable elements during meiosis by forming complexes composed of piRNAs and Piwi proteins and govern the methylation and subsequent repression of transposons. Acts as a co-chaperone via its interaction with HSP90 and is required for the piRNA amplification process, the secondary piRNA biogenesis. May be required together with HSP90 in removal of 16 nucleotide ping-pong by-products from Piwi complexes, possibly facilitating turnover of Piwi complexes. This is Inactive peptidyl-prolyl cis-trans isomerase FKBP6 (FKBP6) from Equus caballus (Horse).